The chain runs to 274 residues: Large ribosomal subunit protein uL2 (274 aa).

Residues 225 to 274 (MNPVDHPHGGGEGRSPIGRHPVTPWGKPTLGVKTRKKNKASSKLIIKRRK) are disordered. Residues 257 to 274 (KTRKKNKASSKLIIKRRK) show a composition bias toward basic residues.

It belongs to the universal ribosomal protein uL2 family. Part of the 50S ribosomal subunit. Forms a bridge to the 30S subunit in the 70S ribosome.

Its function is as follows. One of the primary rRNA binding proteins. Required for association of the 30S and 50S subunits to form the 70S ribosome, for tRNA binding and peptide bond formation. It has been suggested to have peptidyltransferase activity; this is somewhat controversial. Makes several contacts with the 16S rRNA in the 70S ribosome. The polypeptide is Large ribosomal subunit protein uL2 (Carboxydothermus hydrogenoformans (strain ATCC BAA-161 / DSM 6008 / Z-2901)).